A 534-amino-acid chain; its full sequence is Inorganic phosphate transporter 1-6 (534 aa).

Residues 1–29 (MGGGGGEQQQLEVLHALDVAKTQWYHFTA) lie on the Cytoplasmic side of the membrane. A helical transmembrane segment spans residues 30–50 (IVVAGMGFFTDAYDLFCISLV). The Extracellular portion of the chain corresponds to 51 to 75 (TKLLGRIYYRVDGSPSPGTLPPHVS). The helical transmembrane segment at 76 to 96 (ASVNGVAFVGTLSGQLFFGWL) threads the bilayer. Residues 97–104 (GDKLGRKR) lie on the Cytoplasmic side of the membrane. Residues 105–125 (VYGITLMLMVLCSLASALSFG) traverse the membrane as a helical segment. The Extracellular segment spans residues 126 to 127 (HT). A helical transmembrane segment spans residues 128 to 148 (PTSVMATLCFFRFWLGFGIGG). Residues 149–168 (DYPLSATIMSEYANKKTRGA) lie on the Cytoplasmic side of the membrane. Residues 169 to 189 (FIAAVFAMQGFGIITGGLVAI) traverse the membrane as a helical segment. At 190–216 (LVSASFRAAFPAPPYGEDPVASTPPQA) the chain is on the extracellular side. A helical transmembrane segment spans residues 217–237 (DFVWRIILMLGALPAALTYYW). Over 238–294 (RTKMPETARYTALVANNAKQAAADMSKVLQVVEMRNIGNNGGSRRPFGLFSGEFVRR) the chain is Cytoplasmic. Residues 295 to 315 (HGLHLVGTSATWLLLDIAFYS) form a helical membrane-spanning segment. At 316–350 (QNLFQKDIFSAVGWIPKAATMSALEELFRIARAQT) the chain is on the extracellular side. A helical membrane pass occupies residues 351–371 (LIALCGTVPGYWFTVALIDVV). At 372 to 375 (GRFK) the chain is on the cytoplasmic side. The helical transmembrane segment at 376 to 396 (IQAVGFFMMTLFMLTLALPYH) threads the bilayer. Residues 397-405 (HWTAPGKNH) lie on the Extracellular side of the membrane. Residues 406 to 426 (VGFLLLYGLTFFFANFGPNST) traverse the membrane as a helical segment. Residues 427–445 (TFIVPAEIFPARLRATCHG) lie on the Cytoplasmic side of the membrane. The helical transmembrane segment at 446 to 466 (ISAASGKLGAIVGSFGFLYLA) threads the bilayer. The Extracellular segment spans residues 467-486 (QSPDRSKTEHGYPPGIGVRN). A helical membrane pass occupies residues 487-507 (SLFLLAACNLLGLLFTFLVPE). Topologically, residues 508-534 (SKGKSLEEMSGDAEAQEEAPPPLQTVL) are cytoplasmic. A disordered region spans residues 514–534 (EEMSGDAEAQEEAPPPLQTVL).

It belongs to the major facilitator superfamily. Phosphate:H(+) symporter (TC 2.A.1.9) family. As to expression, highly expressed in leaves and at low levels in roots. Expressed in leaf xylem parenchyma cells.

The protein resides in the membrane. Functionally, high-affinity transporter for external inorganic phosphate (Pi). Probably involved in Pi uptake, translocation and internal transport throughout the plant. This is Inorganic phosphate transporter 1-6 (PHT1-6) from Oryza sativa subsp. japonica (Rice).